A 550-amino-acid chain; its full sequence is Putative pentatricopeptide repeat-containing protein At5g37570 (550 aa).

PPR repeat units lie at residues 73–107 (GTYLWNHLIKGYSNKFLFFETVSILMRMMRTGLAR), 109–143 (DEYTFPLVMKVCSNNGQVRVGSSVHGLVLRIGFDK), 144–174 (DVVVGTSFVDFYGKCKDLFSARKVFGEMPER), 175–205 (NAVSWTALVVAYVKSGELEEAKSMFDLMPER), 206–240 (NLGSWNALVDGLVKSGDLVNAKKLFDEMPKRDIIS), 241–267 (YTSMIDGYAKGGDMVSARDLFEEARGV), 268–302 (DVRAWSALILGYAQNGQPNEAFKVFSEMCAKNVKP), 303–333 (DEFIMVGLMSACSQMGCFELCEKVDSYLHQR), 339–369 (SHYVVPALIDMNAKCGHMDRAAKLFEEMPQR), 370–404 (DLVSYCSMMEGMAIHGCGSEAIRLFEKMVDEGIVP), 405–435 (DEVAFTVILKVCGQSRLVEEGLRYFELMRKK), and 441–475 (SPDHYSCIVNLLSRTGKLKEAYELIKSMPFEAHAS). Residues 476–550 (AWGSLLGGCS…KICGRSWISR (75 aa)) form a type E motif region.

The protein belongs to the PPR family. PCMP-E subfamily.

This Arabidopsis thaliana (Mouse-ear cress) protein is Putative pentatricopeptide repeat-containing protein At5g37570 (PCMP-E37).